Reading from the N-terminus, the 142-residue chain is FAD synthase (142 aa).

ATP is bound by residues V9–F10, H14–H17, D93, and Y120.

The protein belongs to the archaeal FAD synthase family. As to quaternary structure, homodimer. Requires a divalent metal cation as cofactor.

It carries out the reaction FMN + ATP + H(+) = FAD + diphosphate. It participates in cofactor biosynthesis; FAD biosynthesis; FAD from FMN: step 1/1. Functionally, catalyzes the transfer of the AMP portion of ATP to flavin mononucleotide (FMN) to produce flavin adenine dinucleotide (FAD) coenzyme. The sequence is that of FAD synthase from Thermoplasma acidophilum (strain ATCC 25905 / DSM 1728 / JCM 9062 / NBRC 15155 / AMRC-C165).